The primary structure comprises 758 residues: Thiosulfate reductase molybdopterin-containing subunit PhsA (758 aa).

Residues 1–30 (MSISRRSFLQGVGIGCSACALGAFPPGALA) constitute a signal peptide (tat-type signal). Positions 41–97 (TTLTPSLCEMCSFRCPIQAQVVNNKTVFIQGNPSAPQQGTRICARGGSGVSLVNDPQ) constitute a 4Fe-4S Mo/W bis-MGD-type domain. [4Fe-4S] cluster-binding residues include Cys48, Cys51, Cys55, and Cys83.

This sequence belongs to the prokaryotic molybdopterin-containing oxidoreductase family. Composed of three subunits: PhsA, PhsB and PhsC. The cofactor is [4Fe-4S] cluster. Mo-bis(molybdopterin guanine dinucleotide) is required as a cofactor. Predicted to be exported by the Tat system. The position of the signal peptide cleavage has not been experimentally proven.

The protein resides in the periplasm. It catalyses the reaction a quinone + hydrogen sulfide + sulfite + 2 H(+) = thiosulfate + a quinol. Functionally, component of the PhsABC thiosulfate reductase that catalyzes the reduction of thiosulfate to sulfite and hydrogen sulfide, with menaquinol as the sole electron donor. Proton motive force (PMF) is required to drive transmembrane electron transfer within the reductase. The PhsA subunit contains the active site molybdenum-bis(molybdopterin guanine dinucleotide) (Mo-bis-MGD) cofactor. This Salmonella typhimurium (strain LT2 / SGSC1412 / ATCC 700720) protein is Thiosulfate reductase molybdopterin-containing subunit PhsA.